The following is a 598-amino-acid chain: UvrABC system protein C (598 aa).

Residues 13–92 (SSPGVYLMKD…IKKYQPRYNV (80 aa)) enclose the GIY-YIG domain. Residues 206–241 (DTTIANLEEAIKKASQEHKFEHAAALYRTLTLIRQT) enclose the UVR domain.

It belongs to the UvrC family. In terms of assembly, interacts with UvrB in an incision complex.

The protein localises to the cytoplasm. Functionally, the UvrABC repair system catalyzes the recognition and processing of DNA lesions. UvrC both incises the 5' and 3' sides of the lesion. The N-terminal half is responsible for the 3' incision and the C-terminal half is responsible for the 5' incision. The polypeptide is UvrABC system protein C (Chlamydia muridarum (strain MoPn / Nigg)).